A 332-amino-acid polypeptide reads, in one-letter code: Nucleoid-associated protein VP2128 (332 aa).

This sequence belongs to the YejK family.

The protein localises to the cytoplasm. The protein resides in the nucleoid. This chain is Nucleoid-associated protein VP2128, found in Vibrio parahaemolyticus serotype O3:K6 (strain RIMD 2210633).